We begin with the raw amino-acid sequence, 372 residues long: MNRSHRHGAGSGCLGTMEVKSKFGAEFRRFSLERSKPGKFEEFYGLLQHVHKIPNVDVLVGYADIHGDLLPINNDDNYHKAVSTANPLLRIFIQKKEEADYSAFGTDTLIKKKNVLTNVLRPDNHRKKPHIVISMPQDFRPVSSIIDVDILPETHRRVRLYKYGTEKPLGFYIRDGSSVRVTPHGLEKVPGIFISRLVPGGLAQSTGLLAVNDEVLEVNGIEVSGKSLDQVTDMMIANSRNLIITVRPANQRNNVVRNSRTSGSSGQSTDNSLLGYPQQIEPSFEPEDEDSEEDDIIIEDNGVPQQIPKAVPNTESLESLTQIELSFESGQNGFIPSNEVSLAAIASSSNTEFETHAPDQKLLEEDGTIITL.

Residue serine 11 is modified to Phosphoserine. The region spanning 16–96 is the PB1 domain; that stretch reads TMEVKSKFGA…PLLRIFIQKK (81 aa). Residues 126–253 form an interaction with PARD3 and CDC42 region; it reads RKKPHIVISM…ITVRPANQRN (128 aa). The 18-residue stretch at 133–150 folds into the Pseudo-CRIB domain; it reads ISMPQDFRPVSSIIDVDI. The region spanning 157–250 is the PDZ domain; sequence RVRLYKYGTE…NLIITVRPAN (94 aa). The span at 253–272 shows a compositional bias: polar residues; that stretch reads NNVVRNSRTSGSSGQSTDNS. A disordered region spans residues 253 to 292; that stretch reads NNVVRNSRTSGSSGQSTDNSLLGYPQQIEPSFEPEDEDSE.

It belongs to the PAR6 family. As to quaternary structure, interacts with PARD3. Interacts with GTP-bound forms of CDC42 and RAC1. Interacts with GTP-bound RHOQ/TC10. Interacts with PALS1. Interacts with the N-terminal part of PRKCI and PRKCZ. Part of a complex with PARD3, CDC42 or RAC1 and PRKCI or PRKCZ. Part of a complex with LLGL1 and PRKCI. Interacts with PARD3B. Interacts with ECT2. Expressed in pancreas and in both adult and fetal kidney. Weakly expressed in placenta and lung. Not expressed in other tissues.

The protein resides in the cytoplasm. The protein localises to the cell membrane. It localises to the cell junction. Its subcellular location is the tight junction. Functionally, adapter protein involved in asymmetrical cell division and cell polarization processes. Probably involved in formation of epithelial tight junctions. Association with PARD3 may prevent the interaction of PARD3 with F11R/JAM1, thereby preventing tight junction assembly. The PARD6-PARD3 complex links GTP-bound Rho small GTPases to atypical protein kinase C proteins. This is Partitioning defective 6 homolog beta (PARD6B) from Homo sapiens (Human).